Consider the following 718-residue polypeptide: Catalase-peroxidase (718 aa).

Residues 1 to 24 (MDQKSDNAGKCPVAHTVPKGRSNR) are disordered. The tryptophyl-tyrosyl-methioninium (Trp-Tyr) (with M-243) cross-link spans 95-217 (WHSAGTYRIT…LAAVQMGLIY (123 aa)). The active-site Proton acceptor is His-96. The tryptophyl-tyrosyl-methioninium (Tyr-Met) (with W-95) cross-link spans 217 to 243 (YVNPEGPNGNPDPVAAAREIRETFARM). Heme b is bound at residue His-258.

This sequence belongs to the peroxidase family. Peroxidase/catalase subfamily. As to quaternary structure, homodimer or homotetramer. Heme b serves as cofactor. In terms of processing, formation of the three residue Trp-Tyr-Met cross-link is important for the catalase, but not the peroxidase activity of the enzyme.

It carries out the reaction H2O2 + AH2 = A + 2 H2O. The enzyme catalyses 2 H2O2 = O2 + 2 H2O. Functionally, bifunctional enzyme with both catalase and broad-spectrum peroxidase activity. This is Catalase-peroxidase from Sinorhizobium fredii (strain NBRC 101917 / NGR234).